The primary structure comprises 691 residues: Beta-galactosidase III (691 aa).

Substrate-binding residues include Arg121 and Asn159. Glu160 (proton donor) is an active-site residue. Glu318 (nucleophile) is an active-site residue. Substrate-binding positions include Trp326 and 366 to 369 (EKWH).

It belongs to the glycosyl hydrolase 42 family.

It catalyses the reaction Hydrolysis of terminal non-reducing beta-D-galactose residues in beta-D-galactosides.. Functionally, specific for beta-D-anomer-linked galactoside substrates. Hydrolyzes o-nitrophenyl-beta-D-galactopyranoside (ONPG), chromogen 5-bromo-4-chloro-3-indolyl-beta-D-galactopyranoside (X-gal) and to a lesser extent lactose. Hydrolyzes p-nitrophenyl-beta-D-galacturonide very slightly. Does not hydrolyze maltose, sucrose, raffinose or melibiose. Has some transgalactosylation activity yielding galacto-oligosaccharides (GaOS), including O-beta-D-galactopyranosyl-(1,3)-O-beta-D-galactopyranosyl-(1-4)-D-glucopyranose. This Bifidobacterium longum subsp. infantis protein is Beta-galactosidase III.